The chain runs to 178 residues: Large ribosomal subunit protein uL6 (178 aa).

It belongs to the universal ribosomal protein uL6 family. As to quaternary structure, part of the 50S ribosomal subunit.

Functionally, this protein binds to the 23S rRNA, and is important in its secondary structure. It is located near the subunit interface in the base of the L7/L12 stalk, and near the tRNA binding site of the peptidyltransferase center. The protein is Large ribosomal subunit protein uL6 of Corynebacterium glutamicum (strain R).